A 149-amino-acid chain; its full sequence is D-aminoacyl-tRNA deacylase (149 aa).

The Gly-cisPro motif, important for rejection of L-amino acids motif lies at 137 to 138 (GP).

It belongs to the DTD family. In terms of assembly, homodimer.

Its subcellular location is the cytoplasm. The catalysed reaction is glycyl-tRNA(Ala) + H2O = tRNA(Ala) + glycine + H(+). It carries out the reaction a D-aminoacyl-tRNA + H2O = a tRNA + a D-alpha-amino acid + H(+). In terms of biological role, an aminoacyl-tRNA editing enzyme that deacylates mischarged D-aminoacyl-tRNAs. Also deacylates mischarged glycyl-tRNA(Ala), protecting cells against glycine mischarging by AlaRS. Acts via tRNA-based rather than protein-based catalysis; rejects L-amino acids rather than detecting D-amino acids in the active site. By recycling D-aminoacyl-tRNA to D-amino acids and free tRNA molecules, this enzyme counteracts the toxicity associated with the formation of D-aminoacyl-tRNA entities in vivo and helps enforce protein L-homochirality. This is D-aminoacyl-tRNA deacylase from Anaeromyxobacter dehalogenans (strain 2CP-C).